The sequence spans 281 residues: 3-hydroxybutyryl-CoA dehydrogenase (281 aa).

It belongs to the 3-hydroxyacyl-CoA dehydrogenase family.

The enzyme catalyses (3S)-3-hydroxybutanoyl-CoA + NADP(+) = acetoacetyl-CoA + NADPH + H(+). It participates in lipid metabolism; butanoate metabolism. This chain is 3-hydroxybutyryl-CoA dehydrogenase (hbd), found in Clostridioides difficile (Peptoclostridium difficile).